A 183-amino-acid chain; its full sequence is Large ribosomal subunit protein uL6 (183 aa).

It belongs to the universal ribosomal protein uL6 family. Part of the 50S ribosomal subunit.

Functionally, this protein binds to the 23S rRNA, and is important in its secondary structure. It is located near the subunit interface in the base of the L7/L12 stalk, and near the tRNA binding site of the peptidyltransferase center. The sequence is that of Large ribosomal subunit protein uL6 from Chlamydia abortus (strain DSM 27085 / S26/3) (Chlamydophila abortus).